The following is a 46-amino-acid chain: Denclatoxin-B (46 aa).

Disulfide bonds link Cys3–Cys40, Cys4–Cys32, and Cys16–Cys26.

The protein belongs to the plant thionin (TC 1.C.44) family.

Its subcellular location is the secreted. In terms of biological role, thionins are small plant proteins which are toxic to animal cells. They seem to exert their toxic effect at the level of the cell membrane. Their precise function is not known. This is Denclatoxin-B from Dendrophthora clavata (Columbian mistletoe).